A 358-amino-acid chain; its full sequence is MEELSQALASSFSVSQELNSTAAPHPRLSQYKSKYSSLEQSERRRQLLELQKSKRLDYVNHARRLAEDDWTGMESGEEEKKKDEEEMDLDPVKKLPKRYANQLMLSEWLIDVPSDLGQEWIVVVCPVGKRALIVASRGSTSAYTKSGYCVNRFSSLLPGGNRRNSTTAKDYTILDCIYSEVNQTYYVLDVMCWRGHPFYDCQTDFRFYWMNSKLPEEEGLGEKTKINPFKFVGLKNFPCTPESLCKVLSMDFPFEVDGLLFYHKQTHYSPGSTPLVGWLRPYMVSDILGVAVPAGPLTTKPEYAGHQLQQIIEHKRSQEDTKEKLTHKASENGHYELEHLSTPKLRSPPHSSESLMDS.

Methionine 1 is subject to N-acetylmethionine. Disordered regions lie at residues 1-39 (MEELSQALASSFSVSQELNSTAAPHPRLSQYKSKYSSLE) and 69-89 (DWTGMESGEEEKKKDEEEMDL). The interval 1-65 (MEELSQALAS…LDYVNHARRL (65 aa)) is necessary for interaction with KPNB1 and m3G-cap U1 and U5 snRNP import receptor activity. Residues 1–160 (MEELSQALAS…NRFSSLLPGG (160 aa)) are necessary for interaction with XPO1. 2 stretches are compositionally biased toward polar residues: residues 7–22 (ALASSFSVSQELNSTA) and 30–39 (QYKSKYSSLE). The region spanning 11–73 (SFSVSQELNS…RLAEDDWTGM (63 aa)) is the IBB domain. Serine 75 is modified (phosphoserine). Residues 128-130 (GKR) form an interaction with m3G-cap structure region. A necessary for binding to the m3G-cap structure region spans residues 210–329 (MNSKLPEEEG…DTKEKLTHKA (120 aa)). Over residues 315–341 (KRSQEDTKEKLTHKASENGHYELEHLS) the composition is skewed to basic and acidic residues. The disordered stretch occupies residues 315–358 (KRSQEDTKEKLTHKASENGHYELEHLSTPKLRSPPHSSESLMDS). Polar residues predominate over residues 349–358 (PHSSESLMDS). The residue at position 351 (serine 351) is a Phosphoserine.

The protein belongs to the snurportin family. As to quaternary structure, component of an import snRNP complex composed of KPNB1, SNUPN, SMN1 and ZNF259. Component of a nuclear export receptor complex composed of KPNB1, Ran, SNUPN and XPO1. Found in a trimeric export complex with SNUPN, Ran and XPO1. Interacts (via IBB domain) with KPNB1; the interaction is direct. Interacts with DDX20, IPO7, SMN1, SNRPB and XPO1. Interacts directly with XPO1. Its interaction with XPO1 and binding to m3G-cap U snRNPs appears to be mutually exclusive. Can form homomers.

The protein localises to the nucleus. The protein resides in the cytoplasm. Functionally, functions as an U snRNP-specific nuclear import adapter. Involved in the trimethylguanosine (m3G)-cap-dependent nuclear import of U snRNPs. Binds specifically to the terminal m3G-cap U snRNAs. The chain is Snurportin-1 (Snupn) from Rattus norvegicus (Rat).